We begin with the raw amino-acid sequence, 294 residues long: GDP-6-deoxy-D-talose 4-dehydrogenase (294 aa).

Residues phenylalanine 11–isoleucine 12, aspartate 38–leucine 39, leucine 60–threonine 64, threonine 104, tyrosine 128, lysine 132, and phenylalanine 154 contribute to the NAD(+) site. Substrate is bound by residues threonine 104 and tyrosine 128. Tyrosine 128 (proton acceptor) is an active-site residue. Asparagine 155 and arginine 190 together coordinate substrate.

The protein belongs to the NAD(P)-dependent epimerase/dehydratase family.

The catalysed reaction is GDP-6-deoxy-alpha-D-talose + NAD(+) = GDP-4-dehydro-alpha-D-rhamnose + NADH + H(+). The enzyme catalyses GDP-6-deoxy-alpha-D-talose + NADP(+) = GDP-4-dehydro-alpha-D-rhamnose + NADPH + H(+). Its pathway is bacterial outer membrane biogenesis; LPS O-antigen biosynthesis. In terms of biological role, catalyzes the conversion of GDP-4-dehydro-6-deoxy-D-mannose to GDP-6-deoxy-D-talose. In Aggregatibacter actinomycetemcomitans (Actinobacillus actinomycetemcomitans), this protein is GDP-6-deoxy-D-talose 4-dehydrogenase (tld).